The sequence spans 473 residues: Tryptophanase (473 aa).

The residue at position 270 (lysine 270) is an N6-(pyridoxal phosphate)lysine.

Belongs to the beta-eliminating lyase family. Homotetramer. It depends on pyridoxal 5'-phosphate as a cofactor.

The catalysed reaction is L-tryptophan + H2O = indole + pyruvate + NH4(+). The protein operates within amino-acid degradation; L-tryptophan degradation via pyruvate pathway; indole and pyruvate from L-tryptophan: step 1/1. The chain is Tryptophanase from Vibrio vulnificus (strain CMCP6).